The primary structure comprises 493 residues: Involucrin (493 aa).

3 disordered regions span residues 1–47 (MSQQ…CQKV), 60–123 (EEKH…GQLE), and 139–493 (KRDE…GQHE). The span at 76–89 (EQQQPQEQELQQQH) shows a compositional bias: low complexity. Basic and acidic residues-rich tracts occupy residues 90–116 (WEQDKEHQKAENPEQQLKQEKVQREKQ), 139–151 (KRDEQLGTKKEQL), 161–174 (QLKHLEQEEGHLEL), 184–193 (NLEHQEKPLE), and 201–213 (QLKHLEQQEKPLE). Polar residues predominate over residues 228–240 (QEGQSELPEQQRG). 5 stretches are compositionally biased toward basic and acidic residues: residues 250-270 (GQLKHLEEQKGQLKHLEHEEG), 282-360 (KHLE…HEGQ), 372-386 (KHLEQEEKQLEHPEQ), 411-431 (KHLEQQEKQLEHPQQQEEQLK), and 439-450 (QLKDLEQQERQL). A compositionally biased stretch (low complexity) spans 473–493 (GEVLLPVEQQQQKQEVQGQHE).

The protein belongs to the involucrin family. As to quaternary structure, directly or indirectly cross-linked to cornifelin (CNFN). Post-translationally, substrate of transglutaminase. Specific glutamines or lysines are cross-linked to keratins, desmoplakin and to inter involucrin molecules. Keratinocytes of epidermis and other stratified squamous epithelia.

The protein resides in the cytoplasm. Part of the insoluble cornified cell envelope (CE) of stratified squamous epithelia. This is Involucrin (IVL) from Saguinus oedipus (Cotton-top tamarin).